Here is a 99-residue protein sequence, read N- to C-terminus: Putative protein adenylyltransferase MJ0141 (99 aa).

The GSX(10)DXD motif motif lies at 29 to 43 (GSYARGDYDEESDVD). Positions 41 and 43 each coordinate Mg(2+).

Belongs to the MntA antitoxin family. Mg(2+) is required as a cofactor.

It carries out the reaction L-tyrosyl-[protein] + ATP = O-(5'-adenylyl)-L-tyrosyl-[protein] + diphosphate. It catalyses the reaction O-(5'-adenylyl)-L-tyrosyl-[protein] + ATP = O-[5'-(adenylyl-(5'-&gt;3')-adenylyl)]-L-tyrosyl-[protein] + diphosphate. Functionally, putative antitoxin component of a putative type VII toxin-antitoxin (TA) system. Its cognate toxin might be MF0142, which it might AMPylate. The chain is Putative protein adenylyltransferase MJ0141 from Methanocaldococcus jannaschii (strain ATCC 43067 / DSM 2661 / JAL-1 / JCM 10045 / NBRC 100440) (Methanococcus jannaschii).